Reading from the N-terminus, the 1014-residue chain is UvrABC system protein A (1014 aa).

Glycine 32–serine 39 contacts ATP. ABC transporter domains lie at tryptophan 314 to glutamine 592 and glutamine 612 to arginine 941. Position 645–652 (glycine 645–serine 652) interacts with ATP. The C4-type zinc finger occupies cysteine 744–cysteine 770. Over residues threonine 976 to threonine 995 the composition is skewed to low complexity. The disordered stretch occupies residues threonine 976–alanine 1014. Basic residues predominate over residues alanine 996–alanine 1014.

The protein belongs to the ABC transporter superfamily. UvrA family. As to quaternary structure, forms a heterotetramer with UvrB during the search for lesions.

It localises to the cytoplasm. Functionally, the UvrABC repair system catalyzes the recognition and processing of DNA lesions. UvrA is an ATPase and a DNA-binding protein. A damage recognition complex composed of 2 UvrA and 2 UvrB subunits scans DNA for abnormalities. When the presence of a lesion has been verified by UvrB, the UvrA molecules dissociate. The polypeptide is UvrABC system protein A (Streptomyces coelicolor (strain ATCC BAA-471 / A3(2) / M145)).